A 347-amino-acid polypeptide reads, in one-letter code: Transcription factor JunD (347 aa).

A disordered region spans residues 1-46 (METPFYGDEALSGLGGGGSSSGGGGSFASPGRLFPGAPPTAAPGSM). Gly residues predominate over residues 13 to 26 (GLGGGGSSSGGGGS). The Menin-binding motif (MBM) motif lies at 29 to 41 (SPGRLFPGAPPTA). Residues 48–57 (KKDALTLSLS) carry the MAP kinase docking motif; essential for its phosphorylation motif. The disordered stretch occupies residues 63–91 (ALKPAAAPPPGPLRTDGAPGTAPPDGLLA). Ser92 is modified (phosphoserine). Position 102 is a phosphoserine; by MAPK8 (Ser102). A Phosphothreonine modification is found at Thr119. 2 disordered regions span residues 164–183 (AAAG…SELA) and 218–264 (EPVP…IDMD). Pro residues predominate over residues 220 to 231 (VPFPPPPPPGTL). A phosphoserine mark is found at Ser251, Ser255, and Ser259. The tract at residues 268–295 (RIKAERKRLRNRIAASKCRKRKLERISR) is basic motif. The bZIP domain occupies 268 to 331 (RIKAERKRLR…AQLKQKVLSH (64 aa)). Positions 296–324 (LEEKVKTLKSQNTELASTASLLREQVAQL) are leucine-zipper.

Belongs to the bZIP family. Jun subfamily. As to quaternary structure, heterodimer; binds DNA as a heterodimer. Component of an AP-1 transcription factor complex composed of JUN-FOS heterodimers. As part of the AP-1 transcription factor complex, forms heterodimers with FOS proteins, thereby binding to the AP-1 consensus sequence and stimulating transcription. Forms heterodimers with FOSB; thereby binding to the AP-1 consensus sequence. Interacts (via MBM motif) with MEN1; this interaction represses transcriptional activation. Interacts with MAPK10; this interaction is inhibited in the presence of MEN1. Post-translationally, phosphorylated by MAP kinases MAPK8 and MAPK10; phosphorylation is inhibited in the presence of MEN1.

The protein localises to the nucleus. Its function is as follows. Transcription factor binding AP-1 sites. Heterodimerizes with proteins of the FOS family to form an AP-1 transcription factor complex, thereby enhancing their DNA binding activity to an AP-1 consensus sequence 3'-TGA[GC]TCA-5' and enhancing their transcriptional activity. The chain is Transcription factor JunD (JUND) from Bos taurus (Bovine).